The chain runs to 667 residues: MHKLTFAQLSFNSDNTPVSEQFDDIYFSTEDGVQESYYVFQDGNQLWQKWQNHHRSAFVIAETGFGTGLNFLAVAEKFQQFRSTFPDSPLKRLYFISFEKYPLTQQQLADIHQHYPQFTQLSATLIACWQPRQAGCQRYHFDDVYLDIWFGEMLENLPQLGDLYNATVDSWFLDGFSPDKNPTMWHEQLYQHMFRLTRVGGSFATFTAASHVRCGLQAVGFTVYKRKGFAKKREMLCGEKAQKSQTAEVNFPYFYSPPAIVNDDIAIVGGGIASLFVALSLLERGKQVTLYCQDSQVAQKASGNAQGAIYPQLSDDDPRNVRFYVHCFDYALQRLKQFEKLVPFEHALTGVVLSAYNEKTAQKLQKIARQTQNQDLFKWCQAEELTEYLGVAIANEGAFIPQAGWLSPVQFVQQAFAYLQTKGLKIVLNHTVTDPQFVEGKWQWQYQGVQFAHHILVLANGHSFTQFSQAEGIPLYPVRGQVSQIPTTPALQKLKCVICYDGYLTPMATNGYHCIGASHVRDNTDMAFSAIEHQQNLAKLQQNIGAYHWTQGIDLSANLAKQGIRSALRDRVPMVGPIPHFAVQKQQYSNIYNLLRRKKAVENAVNFPHLYMVNGLASRGLTTAPLLGEMLASLIVNEPIPISQDIWHALLPNRTWLRKWLKGSKVV.

Residues 1–241 are tRNA (mnm(5)s(2)U34)-methyltransferase; it reads MHKLTFAQLS…KREMLCGEKA (241 aa). The segment at 268-667 is FAD-dependent cmnm(5)s(2)U34 oxidoreductase; it reads VGGGIASLFV…RKWLKGSKVV (400 aa).

The protein in the N-terminal section; belongs to the methyltransferase superfamily. tRNA (mnm(5)s(2)U34)-methyltransferase family. This sequence in the C-terminal section; belongs to the DAO family. The cofactor is FAD.

It localises to the cytoplasm. It catalyses the reaction 5-aminomethyl-2-thiouridine(34) in tRNA + S-adenosyl-L-methionine = 5-methylaminomethyl-2-thiouridine(34) in tRNA + S-adenosyl-L-homocysteine + H(+). In terms of biological role, catalyzes the last two steps in the biosynthesis of 5-methylaminomethyl-2-thiouridine (mnm(5)s(2)U) at the wobble position (U34) in tRNA. Catalyzes the FAD-dependent demodification of cmnm(5)s(2)U34 to nm(5)s(2)U34, followed by the transfer of a methyl group from S-adenosyl-L-methionine to nm(5)s(2)U34, to form mnm(5)s(2)U34. The chain is tRNA 5-methylaminomethyl-2-thiouridine biosynthesis bifunctional protein MnmC from Haemophilus ducreyi (strain 35000HP / ATCC 700724).